Reading from the N-terminus, the 389-residue chain is S-adenosylmethionine synthase (389 aa).

Histidine 17 lines the ATP pocket. Residue aspartate 19 coordinates Mg(2+). Residue glutamate 45 coordinates K(+). The L-methionine site is built by glutamate 58 and glutamine 102. The interval 102–112 is flexible loop; that stretch reads QSADIAQGVDA. Residues 167–169, aspartate 241, 247–248, alanine 264, and lysine 268 contribute to the ATP site; these read DAK and RK. Aspartate 241 is an L-methionine binding site. Lysine 272 is an L-methionine binding site.

This sequence belongs to the AdoMet synthase family. Homotetramer; dimer of dimers. Mg(2+) serves as cofactor. It depends on K(+) as a cofactor.

It localises to the cytoplasm. It catalyses the reaction L-methionine + ATP + H2O = S-adenosyl-L-methionine + phosphate + diphosphate. The protein operates within amino-acid biosynthesis; S-adenosyl-L-methionine biosynthesis; S-adenosyl-L-methionine from L-methionine: step 1/1. Functionally, catalyzes the formation of S-adenosylmethionine (AdoMet) from methionine and ATP. The overall synthetic reaction is composed of two sequential steps, AdoMet formation and the subsequent tripolyphosphate hydrolysis which occurs prior to release of AdoMet from the enzyme. The chain is S-adenosylmethionine synthase from Parvibaculum lavamentivorans (strain DS-1 / DSM 13023 / NCIMB 13966).